The following is a 249-amino-acid chain: 1-(5-phosphoribosyl)-5-[(5-phosphoribosylamino)methylideneamino] imidazole-4-carboxamide isomerase (249 aa).

Residue Asp-10 is the Proton acceptor of the active site. The active-site Proton donor is Asp-136.

It belongs to the HisA/HisF family.

The protein localises to the cytoplasm. The enzyme catalyses 1-(5-phospho-beta-D-ribosyl)-5-[(5-phospho-beta-D-ribosylamino)methylideneamino]imidazole-4-carboxamide = 5-[(5-phospho-1-deoxy-D-ribulos-1-ylimino)methylamino]-1-(5-phospho-beta-D-ribosyl)imidazole-4-carboxamide. It functions in the pathway amino-acid biosynthesis; L-histidine biosynthesis; L-histidine from 5-phospho-alpha-D-ribose 1-diphosphate: step 4/9. This Symbiobacterium thermophilum (strain DSM 24528 / JCM 14929 / IAM 14863 / T) protein is 1-(5-phosphoribosyl)-5-[(5-phosphoribosylamino)methylideneamino] imidazole-4-carboxamide isomerase.